The primary structure comprises 354 residues: Glycerol-1-phosphate dehydrogenase [NAD(P)+] (354 aa).

Residues glycine 103–aspartate 107 and threonine 125–serine 128 each bind NAD(+). Aspartate 130 is a substrate binding site. Serine 134 is an NAD(+) binding site. Aspartate 176 lines the substrate pocket. Positions 176 and 255 each coordinate Zn(2+). Residue histidine 259 coordinates substrate. Residue histidine 271 participates in Zn(2+) binding.

Belongs to the glycerol-1-phosphate dehydrogenase family. In terms of assembly, homodimer. The cofactor is Zn(2+).

It localises to the cytoplasm. The enzyme catalyses sn-glycerol 1-phosphate + NAD(+) = dihydroxyacetone phosphate + NADH + H(+). It carries out the reaction sn-glycerol 1-phosphate + NADP(+) = dihydroxyacetone phosphate + NADPH + H(+). Its pathway is membrane lipid metabolism; glycerophospholipid metabolism. Functionally, catalyzes the NAD(P)H-dependent reduction of dihydroxyacetonephosphate (DHAP or glycerone phosphate) to glycerol 1-phosphate (G1P). The G1P thus generated is used as the glycerophosphate backbone of phospholipids in the cellular membranes of Archaea. The protein is Glycerol-1-phosphate dehydrogenase [NAD(P)+] of Cenarchaeum symbiosum (strain A).